The following is a 419-amino-acid chain: Putative BTB/POZ domain-containing protein L85 (419 aa).

One can recognise a BTB domain in the interval 16–89; sequence TDLTIVLKDD…FYDKTSTNSE (74 aa). The segment at 250–290 is disordered; that stretch reads SSSNDSDEDASETESEHNSETESEHNSETESEHNSETESKH. Over residues 263–290 the composition is skewed to basic and acidic residues; that stretch reads ESEHNSETESEHNSETESEHNSETESKH.

Belongs to the mimivirus BTB/WD family.

This Acanthamoeba polyphaga (Amoeba) protein is Putative BTB/POZ domain-containing protein L85.